Reading from the N-terminus, the 159-residue chain is GDP-mannose mannosyl hydrolase (159 aa).

Residues 2-3 (FL), Phe8, and Arg36 contribute to the substrate site. The Nudix hydrolase domain occupies 13–153 (RSTPLVSLDF…SRAYFLAEKR (141 aa)). Residues Gly49, Glu69, and Gln122 each coordinate Mg(2+). The Nudix box signature appears at 50 to 71 (GRVQKDETLEAAFERLTMAELG).

As to quaternary structure, homodimer. Mg(2+) is required as a cofactor.

It catalyses the reaction GDP-alpha-D-mannose + H2O = D-mannose + GDP + H(+). Its function is as follows. Hydrolyzes both GDP-mannose and GDP-glucose. Could participate in the regulation of cell wall biosynthesis by influencing the concentration of GDP-mannose or GDP-glucose in the cell. Might also be involved in the biosynthesis of the slime polysaccharide colanic acid. The polypeptide is GDP-mannose mannosyl hydrolase (Escherichia coli (strain K12)).